The following is a 259-amino-acid chain: ATP synthase subunit b 2 (259 aa).

The helical transmembrane segment at 5 to 27 (WFTVSAQAINFLILVALLKRFLY) threads the bilayer.

It belongs to the ATPase B chain family. In terms of assembly, F-type ATPases have 2 components, F(1) - the catalytic core - and F(0) - the membrane proton channel. F(1) has five subunits: alpha(3), beta(3), gamma(1), delta(1), epsilon(1). F(0) has three main subunits: a(1), b(2) and c(10-14). The alpha and beta chains form an alternating ring which encloses part of the gamma chain. F(1) is attached to F(0) by a central stalk formed by the gamma and epsilon chains, while a peripheral stalk is formed by the delta and b chains.

The protein localises to the cell inner membrane. F(1)F(0) ATP synthase produces ATP from ADP in the presence of a proton or sodium gradient. F-type ATPases consist of two structural domains, F(1) containing the extramembraneous catalytic core and F(0) containing the membrane proton channel, linked together by a central stalk and a peripheral stalk. During catalysis, ATP synthesis in the catalytic domain of F(1) is coupled via a rotary mechanism of the central stalk subunits to proton translocation. In terms of biological role, component of the F(0) channel, it forms part of the peripheral stalk, linking F(1) to F(0). This is ATP synthase subunit b 2 from Syntrophotalea carbinolica (strain DSM 2380 / NBRC 103641 / GraBd1) (Pelobacter carbinolicus).